The following is a 182-amino-acid chain: uncharacterized protein (182 aa).

Positions 66–133 (QKRKRREIKV…NLEIETNSDS (68 aa)) form a coiled coil.

This is an uncharacterized protein from Acanthamoeba polyphaga (Amoeba).